We begin with the raw amino-acid sequence, 982 residues long: Mineralocorticoid receptor (982 aa).

Residues 1–601 are modulating; the sequence is METKGYHSLP…STGSSRPSKI (601 aa). The span at 230 to 242 shows a compositional bias: polar residues; that stretch reads QGTPLTCSPNVEN. Disordered regions lie at residues 230-328 and 345-375; these read QGTP…AAST and SGTS…PFPK. Residues Ser-249, Ser-258, Ser-282, Ser-286, and Ser-298 each carry the phosphoserine modification. Low complexity predominate over residues 258–299; it reads SPLSSPLSSMKSSISSPPSHCSVKSPVSSPNNVTPRSSVSSP. Residues 300–328 show a composition bias toward polar residues; the sequence is ANINNSRCSVSSPSNTNNRSTLSSPAAST. Low complexity predominate over residues 345–354; it reads SGTSAGSSTS. The Zn(2+) site is built by Cys-602, Cys-605, Cys-619, Cys-622, Cys-638, Cys-644, Cys-654, and Cys-657. 2 consecutive NR C4-type zinc fingers follow at residues 602 to 622 and 638 to 662; these read CLVC…CGSC and CAGR…LQKC. The nuclear receptor DNA-binding region spans 602–667; it reads CLVCGDEASG…RLQKCLQAGM (66 aa). Residues 668–723 form a hinge region; it reads NLGARRSKKLGKLKGIHEEQPQQQPPPPPPPPQSPEEGTTYIAPAKEPSVNTALVP. A disordered region spans residues 682–708; sequence GIHEEQPQQQPPPPPPPPQSPEEGTTY. A compositionally biased stretch (pro residues) spans 690–701; the sequence is QQPPPPPPPPQS. Residues 724-962 form the NR LBD domain; the sequence is QLSAISRALT…EFPAMLVEII (239 aa). Positions 768 and 774 each coordinate 21-hydroxyprogesterone. Aldosterone-binding residues include Asn-768 and Gln-774. Positions 768 and 774 each coordinate progesterone. Residues 780–783 form an important for coactivator binding region; that stretch reads KWAK. Residues Arg-815 and Thr-943 each contribute to the 21-hydroxyprogesterone site. 2 residues coordinate aldosterone: Arg-815 and Thr-943. Progesterone is bound by residues Arg-815 and Thr-943.

The protein belongs to the nuclear hormone receptor family. NR3 subfamily. In terms of processing, phosphorylated. Expressed in hippocampus, being restricted to the more superficial cortical layers.

The protein resides in the cytoplasm. It is found in the nucleus. Functionally, receptor for both mineralocorticoids (MC) such as aldosterone and glucocorticoids (GC) such as corticosterone or cortisol. Binds to mineralocorticoid response elements (MRE) and transactivates target genes. The effect of MC is to increase ion and water transport and thus raise extracellular fluid volume and blood pressure and lower potassium levels. The polypeptide is Mineralocorticoid receptor (NR3C2) (Saimiri sciureus (Common squirrel monkey)).